A 939-amino-acid polypeptide reads, in one-letter code: Probable importin ECU10_0620 (939 aa).

The Importin N-terminal domain maps to 23 to 90 (AEAMLMDLEK…VENILDLFLY (68 aa)).

This sequence belongs to the importin beta family.

It is found in the nucleus. Its subcellular location is the cytoplasm. Functionally, active in protein import into the nucleus. This Encephalitozoon cuniculi (strain GB-M1) (Microsporidian parasite) protein is Probable importin ECU10_0620.